Reading from the N-terminus, the 65-residue chain is Small, acid-soluble spore protein Tlp (65 aa).

This sequence belongs to the Tlp family.

The protein resides in the spore core. This Bacillus anthracis (strain A0248) protein is Small, acid-soluble spore protein Tlp.